The primary structure comprises 404 residues: MQYSEIMIRYGELSTKKKNRMRFINKLKNNMEHVLSIYPDVSVKTDRDRGHVYLNGTDYHEVAESLKEIFGIQAFSPSFKVEKNVDTLVKAVQEIMTSVYKDGMTFKITAKRSDHSFELDSRALNHTLGDAVFSVLPNIKAQMKQPDINLKVEIRDEAAYISYEDIRGAGGLPVGTSGKGMLMLSGGIDSPVAGYLALKRGVDIEAVHFASPPYTSPGALKKAHDLTRKLTKFGGNIQFIEVPFTEIQEEIKAKAPEAYLMTLTRRFMMRITDRIREDRNGLVIINGESLGQVASQTLESMQAINAVTATPIIRPVVTMDKLEIIDIAQKIDTFDISIQPFEDCCTIFAPDRPKTNPKIKNTEQYEKRMDVEGLVERAVAGIMVTTIQPQADSDDVDDLIDDLL.

One can recognise a THUMP domain in the interval 60-165; that stretch reads HEVAESLKEI…DEAAYISYED (106 aa). Residues 183–184, 208–209, R265, G287, and Q296 contribute to the ATP site; these read ML and HF.

This sequence belongs to the ThiI family.

The protein localises to the cytoplasm. The enzyme catalyses [ThiI sulfur-carrier protein]-S-sulfanyl-L-cysteine + a uridine in tRNA + 2 reduced [2Fe-2S]-[ferredoxin] + ATP + H(+) = [ThiI sulfur-carrier protein]-L-cysteine + a 4-thiouridine in tRNA + 2 oxidized [2Fe-2S]-[ferredoxin] + AMP + diphosphate. The catalysed reaction is [ThiS sulfur-carrier protein]-C-terminal Gly-Gly-AMP + S-sulfanyl-L-cysteinyl-[cysteine desulfurase] + AH2 = [ThiS sulfur-carrier protein]-C-terminal-Gly-aminoethanethioate + L-cysteinyl-[cysteine desulfurase] + A + AMP + 2 H(+). The protein operates within cofactor biosynthesis; thiamine diphosphate biosynthesis. Functionally, catalyzes the ATP-dependent transfer of a sulfur to tRNA to produce 4-thiouridine in position 8 of tRNAs, which functions as a near-UV photosensor. Also catalyzes the transfer of sulfur to the sulfur carrier protein ThiS, forming ThiS-thiocarboxylate. This is a step in the synthesis of thiazole, in the thiamine biosynthesis pathway. The sulfur is donated as persulfide by IscS. This is Probable tRNA sulfurtransferase from Streptococcus agalactiae serotype V (strain ATCC BAA-611 / 2603 V/R).